The primary structure comprises 273 residues: 4-hydroxy-tetrahydrodipicolinate reductase (273 aa).

Residues 10 to 15 (GAGGRM), glutamate 36, 100 to 102 (GTT), and 124 to 127 (SGNM) contribute to the NAD(+) site. The active-site Proton donor/acceptor is histidine 157. Position 158 (histidine 158) interacts with (S)-2,3,4,5-tetrahydrodipicolinate. Lysine 161 acts as the Proton donor in catalysis. (S)-2,3,4,5-tetrahydrodipicolinate is bound at residue 167–168 (GT).

Belongs to the DapB family.

It localises to the cytoplasm. The enzyme catalyses (S)-2,3,4,5-tetrahydrodipicolinate + NAD(+) + H2O = (2S,4S)-4-hydroxy-2,3,4,5-tetrahydrodipicolinate + NADH + H(+). The catalysed reaction is (S)-2,3,4,5-tetrahydrodipicolinate + NADP(+) + H2O = (2S,4S)-4-hydroxy-2,3,4,5-tetrahydrodipicolinate + NADPH + H(+). Its pathway is amino-acid biosynthesis; L-lysine biosynthesis via DAP pathway; (S)-tetrahydrodipicolinate from L-aspartate: step 4/4. Catalyzes the conversion of 4-hydroxy-tetrahydrodipicolinate (HTPA) to tetrahydrodipicolinate. This Rhodopseudomonas palustris (strain BisA53) protein is 4-hydroxy-tetrahydrodipicolinate reductase.